Consider the following 251-residue polypeptide: Derlin-1 (251 aa).

Ser-2 is modified (N-acetylserine). Residues 2-15 (SDIGDWFRSIPAIT) are Cytoplasmic-facing. A helical membrane pass occupies residues 16–31 (RYWFAATVAVPLVGKL). The Lumenal portion of the chain corresponds to 32-69 (GLISPAYLFLWPEAFLYRFQIWRPITATFYFPVGPGTG). Residues 70–89 (FLYLVNLYFLYHYSTRLETG) form a helical membrane-spanning segment. Over 90-94 (AFDGR) the chain is Cytoplasmic. Residues 95 to 115 (PADYLFMLLFNWICIVITGLA) traverse the membrane as a helical segment. Residues 116-122 (MDMQLLM) are Lumenal-facing. Residues 123–137 (IPLIMSVLYVWAQLN) form a helical membrane-spanning segment. Residues 138–154 (RDMIVSFWFGTRFKACY) are Cytoplasmic-facing. A helical transmembrane segment spans residues 155 to 166 (LPWVILGFNYII). Residues 167–170 (GGSV) are Lumenal-facing. The helical transmembrane segment at 171–189 (INELIGNLVGHLYFFLMFR) threads the bilayer. Residues 190–251 (YPMDLGGRNF…WGQGFRLGDQ (62 aa)) are Cytoplasmic-facing. Ser-201 carries the phosphoserine modification. Position 202 is a phosphothreonine (Thr-202). Ser-226 bears the Phosphoserine mark. The interval 229–251 (RAADQNGGGGRHNWGQGFRLGDQ) is disordered. Residues 241-248 (NWGQGFRL) carry the SHP-box motif.

Belongs to the derlin family. In terms of assembly, homotetramer. The four subunits of the tetramer are arranged in a twofold symmetry. Forms homo- and heterooligomers with DERL2 and DERL3; binding to DERL3 is poorer than that between DERL2 and DERL3. Interacts (via SHP-box motif) with VCP. Interacts with AMFR, SELENOS, SEL1L, SELENOK and SYVN1, as well as with SEL1L-SYVN1 and VCP-SELENOS protein complexes; this interaction is weaker than that observed between DERL2 and these complexes. Interacts with NGLY1 and YOD1. Does not bind to EDEM1. Interacts with DNAJB9. Interacts with RNF103. Interacts with HM13. Interacts with XBP1 isoform 1 (via luminal/ectodomain domain); the interaction obviates the need for ectodomain shedding prior HM13/SPP-mediated XBP1 isoform 1 cleavage. Interacts with the signal recognition particle/SRP and the SRP receptor; in the process of endoplasmic reticulum stress-induced pre-emptive quality control. May interact with UBXN6. Interacts with ZFAND2B; probably through VCP. Interacts with CCDC47. Interacts with C18orf32. May interact with TRAM1. Forms a complex with SVIP and VCP/p97.

The protein resides in the endoplasmic reticulum membrane. Functionally, functional component of endoplasmic reticulum-associated degradation (ERAD) for misfolded lumenal proteins. Forms homotetramers which encircle a large channel traversing the endoplasmic reticulum (ER) membrane. This allows the retrotranslocation of misfolded proteins from the ER into the cytosol where they are ubiquitinated and degraded by the proteasome. The channel has a lateral gate within the membrane which provides direct access to membrane proteins with no need to reenter the ER lumen first. May mediate the interaction between VCP and the misfolded protein. Also involved in endoplasmic reticulum stress-induced pre-emptive quality control, a mechanism that selectively attenuates the translocation of newly synthesized proteins into the endoplasmic reticulum and reroutes them to the cytosol for proteasomal degradation. By controlling the steady-state expression of the IGF1R receptor, indirectly regulates the insulin-like growth factor receptor signaling pathway. This Pongo abelii (Sumatran orangutan) protein is Derlin-1.